The primary structure comprises 480 residues: DNA repair protein RadA (480 aa).

A C4-type zinc finger spans residues cysteine 10 to cysteine 27. Glycine 95 to serine 102 lines the ATP pocket. A RadA KNRFG motif motif is present at residues lysine 254–glycine 258. The interval aspartate 353–threonine 480 is lon-protease-like. The interval glycine 459 to threonine 480 is disordered. Positions threonine 461 to glycine 470 are enriched in polar residues.

The protein belongs to the RecA family. RadA subfamily.

Functionally, DNA-dependent ATPase involved in processing of recombination intermediates, plays a role in repairing DNA breaks. Stimulates the branch migration of RecA-mediated strand transfer reactions, allowing the 3' invading strand to extend heteroduplex DNA faster. Binds ssDNA in the presence of ADP but not other nucleotides, has ATPase activity that is stimulated by ssDNA and various branched DNA structures, but inhibited by SSB. Does not have RecA's homology-searching function. This Mycobacterium tuberculosis (strain CDC 1551 / Oshkosh) protein is DNA repair protein RadA.